We begin with the raw amino-acid sequence, 514 residues long: Probable lipid II flippase MurJ (514 aa).

The next 14 membrane-spanning stretches (helical) occupy residues 3-23, 25-45, 92-112, 130-150, 157-177, 186-206, 245-265, 271-291, 315-335, 354-374, 386-406, 409-429, 448-468, and 481-501; these read ILKS…FGFF, DVLI…FIAF, ILVL…IIFI, LLKI…CSSI, FFIP…FSFF, IISL…YQFP, ISLI…ISWI, LIEF…FTSF, LILS…LVII, LELY…VSAF, ISIL…FYFQ, GLAL…YWKL, LLIA…FIPS, and LFTI…FLGI.

This sequence belongs to the MurJ/MviN family.

It localises to the cell inner membrane. The protein operates within cell wall biogenesis; peptidoglycan biosynthesis. In terms of biological role, involved in peptidoglycan biosynthesis. Transports lipid-linked peptidoglycan precursors from the inner to the outer leaflet of the cytoplasmic membrane. The polypeptide is Probable lipid II flippase MurJ (Buchnera aphidicola subsp. Schizaphis graminum (strain Sg)).